Here is a 227-residue protein sequence, read N- to C-terminus: Large ribosomal subunit protein uL3 (227 aa).

It belongs to the universal ribosomal protein uL3 family. In terms of assembly, part of the 50S ribosomal subunit. Forms a cluster with proteins L14 and L19.

In terms of biological role, one of the primary rRNA binding proteins, it binds directly near the 3'-end of the 23S rRNA, where it nucleates assembly of the 50S subunit. The sequence is that of Large ribosomal subunit protein uL3 from Persephonella marina (strain DSM 14350 / EX-H1).